The chain runs to 549 residues: Hydroxylamine reductase (549 aa).

[4Fe-4S] cluster-binding residues include cysteine 3, cysteine 6, cysteine 15, and cysteine 21. The hybrid [4Fe-2O-2S] cluster site is built by histidine 244, glutamate 268, cysteine 313, cysteine 405, cysteine 433, cysteine 458, glutamate 492, and lysine 494. Cysteine 405 is subject to Cysteine persulfide.

Belongs to the HCP family. The cofactor is [4Fe-4S] cluster. Hybrid [4Fe-2O-2S] cluster serves as cofactor.

Its subcellular location is the cytoplasm. The catalysed reaction is A + NH4(+) + H2O = hydroxylamine + AH2 + H(+). Functionally, catalyzes the reduction of hydroxylamine to form NH(3) and H(2)O. This is Hydroxylamine reductase from Crocosphaera subtropica (strain ATCC 51142 / BH68) (Cyanothece sp. (strain ATCC 51142)).